A 489-amino-acid polypeptide reads, in one-letter code: Pluviatolide synthase (489 aa).

The chain crosses the membrane as a helical span at residues 6 to 26 (SVLGLSSTLIIALAITVIFLL). Cys432 contributes to the heme binding site.

This sequence belongs to the cytochrome P450 family. Heme is required as a cofactor.

The protein resides in the membrane. The enzyme catalyses (-)-matairesinol + reduced [NADPH--hemoprotein reductase] + O2 = (-)-pluviatolide + oxidized [NADPH--hemoprotein reductase] + 2 H2O + H(+). It functions in the pathway aromatic compound metabolism; phenylpropanoid biosynthesis. In terms of biological role, cytochrome P450 involved in the biosynthesis of etoposide, a chemotherapeutic compound of the topoisomerase inhibitor family. Catalyzes the conversion of matairesinol to pluviatolide. The chain is Pluviatolide synthase from Podophyllum peltatum (American mandrake).